Reading from the N-terminus, the 657-residue chain is Hemocyanin (657 aa).

Asn-167 carries N-linked (GlcNAc...) asparagine glycosylation. Cu cation-binding residues include His-194, His-198, His-224, His-344, His-348, and His-384. Disulfide bonds link Cys-483/Cys-502 and Cys-562/Cys-609.

The protein belongs to the tyrosinase family. Hemocyanin subfamily. As to quaternary structure, it consists of at least four very similar subunits. As to expression, hemolymph.

The protein resides in the secreted. It is found in the extracellular space. Its function is as follows. Hemocyanins are copper-containing oxygen carriers occurring freely dissolved in the hemolymph of many mollusks and arthropods. The polypeptide is Hemocyanin (Palinurus vulgaris (European spiny lobster)).